A 460-amino-acid polypeptide reads, in one-letter code: ERAD-associated E3 ubiquitin-protein ligase HRD1B (460 aa).

Topologically, residues 1 to 3 (MIQ) are cytoplasmic. Residues 4-24 (LKVYAGLSTLATLVVIYHAFS) form a helical membrane-spanning segment. The Lumenal segment spans residues 25–40 (SRGQFYPATVYLSTSK). A helical transmembrane segment spans residues 41–61 (INLVVLLNMGLVLMLSLWNLV). Residues 62–98 (KIVFLGSLREAEVERLNEQAWRELMEILFAITIFRQD) are Cytoplasmic-facing. Residues 99-119 (FSVGFISLVVTLLLIKGLHWM) form a helical membrane-spanning segment. Residues 120–140 (AQKRVEYIETTPSVTLLSHVR) lie on the Lumenal side of the membrane. The chain crosses the membrane as a helical span at residues 141–161 (IVSFMVFLLILDCLLTYSSIQ). Residues 162-170 (QLIQSRKAS) are Cytoplasmic-facing. The chain crosses the membrane as a helical span at residues 171-191 (MSVFFTFEYMILATTTVSIIV). Topologically, residues 192 to 225 (KYAFYVTDMLKEGQWEGKPVYTFYLELVRDLLHL) are lumenal. The chain crosses the membrane as a helical span at residues 226-246 (SMYLCFFLMIFMNYGLPLHLI). Residues 247–460 (RELYETFRNF…TKGKSVADTA (214 aa)) lie on the Cytoplasmic side of the membrane. An RING-type; atypical zinc finger spans residues 292-330 (CIICREEMTSAKKLVCGHLFHVHCLRSWLERQNTCPTCR). The segment at 339-378 (ATSTASGNRGPHQESLQQGTGTSSSDGQGSSVSAAASENM) is disordered. Residues 353 to 375 (SLQQGTGTSSSDGQGSSVSAAAS) show a composition bias toward low complexity.

It belongs to the HRD1 family.

The protein resides in the endoplasmic reticulum membrane. The catalysed reaction is S-ubiquitinyl-[E2 ubiquitin-conjugating enzyme]-L-cysteine + [acceptor protein]-L-lysine = [E2 ubiquitin-conjugating enzyme]-L-cysteine + N(6)-ubiquitinyl-[acceptor protein]-L-lysine.. Its pathway is protein modification; protein ubiquitination. In terms of biological role, probable component of the HRD1 ubiquitin ligase complex that mediates the rapid degradation of misfolded endoplasmic reticulum (ER) proteins, a process called ER-associated degradation (ERAD). Targets the misfolded LRR receptor kinase BRI1. Functions redundantly with HRD3A. The protein is ERAD-associated E3 ubiquitin-protein ligase HRD1B of Arabidopsis thaliana (Mouse-ear cress).